A 231-amino-acid chain; its full sequence is dTTP/UTP pyrophosphatase (231 aa).

Asp-81 functions as the Proton acceptor in the catalytic mechanism.

Belongs to the Maf family. YhdE subfamily. The cofactor is a divalent metal cation.

The protein localises to the cytoplasm. It carries out the reaction dTTP + H2O = dTMP + diphosphate + H(+). The catalysed reaction is UTP + H2O = UMP + diphosphate + H(+). Functionally, nucleoside triphosphate pyrophosphatase that hydrolyzes dTTP and UTP. May have a dual role in cell division arrest and in preventing the incorporation of modified nucleotides into cellular nucleic acids. This is dTTP/UTP pyrophosphatase from Lawsonia intracellularis (strain PHE/MN1-00).